Here is a 157-residue protein sequence, read N- to C-terminus: Hydra actinoporin-like toxin 3 (157 aa).

The first 14 residues, 1–14 (LEATVSRNKKYKFT), serve as a signal peptide directing secretion. Residues 129–131 (IAG) carry the Cell attachment site motif.

Belongs to the actinoporin family. HALT subfamily. As to quaternary structure, octamer or nonamer in membranes. Monomer in the soluble state. In vitro, interacts with folate receptor alpha (of target organism).

It is found in the nematocyst. Its subcellular location is the secreted. The protein localises to the target cell membrane. Functionally, pore-forming protein that forms hydrophilic pores and causes cytolysis. Compared to equinatoxin-2 (AC P61914), it reveals lower cytolysis activity (5-12-fold difference, tested on erythrocytes), a larger pore size (probably 2-3 nm) and different affinity to membrane lipids (100-fold lower affinity to sphingomyelin). Binds to the two sphingolipids, lysophosphatidic acid (LPA) and sphingosine-1-phosphate (S1P). Does not bind (or only weakly) to sulfatides (SFT). Shows cytolytic activity on HeLa cells, with a different potency than its paralogs (from most potent to less potent: HALT-4&gt;HALT-6~HALT-1&gt;HALT-3&gt;HALT-7&gt;HALT-2). Pore formation is a multi-step process that involves specific recognition of membrane lipid by a protein aromatic residues rich region, firm binding to the membrane (mainly driven by hydrophobic interactions) accompanied by the transfer of the N-terminal region to the lipid-water interface and finally pore formation after oligomerization of monomers. In vitro, binds to the folate receptor alpha (FOLR1), a GPI-anchored membrane protein that plays a major role in the uptake of folate/folic acid into cells via endocytosis, suggesting a possible involvement of this receptor in the mechanism of HALT-1-induced cell lysis. In vivo, does not cause visible paralysis in larvae of the blowfly Sarcophaga faculata, the most common arthropod prey of Hydra. This Hydra vulgaris (Hydra) protein is Hydra actinoporin-like toxin 3.